A 225-amino-acid chain; its full sequence is Pathogenesis-related thaumatin-like protein 3.8 (225 aa).

The first 26 residues, Met1–Ala26, serve as a signal peptide directing secretion. 8 cysteine pairs are disulfide-bonded: Cys35–Cys224, Cys76–Cys86, Cys91–Cys97, Cys139–Cys213, Cys144–Cys197, Cys152–Cys162, Cys166–Cys175, and Cys176–Cys184. Asn188 carries N-linked (GlcNAc...) asparagine glycosylation.

It belongs to the thaumatin family.

Functionally, may be involved in disease resistance. In Cryptomeria japonica (Japanese cedar), this protein is Pathogenesis-related thaumatin-like protein 3.8.